The primary structure comprises 137 residues: ATP synthase epsilon chain (137 aa).

It belongs to the ATPase epsilon chain family. F-type ATPases have 2 components, CF(1) - the catalytic core - and CF(0) - the membrane proton channel. CF(1) has five subunits: alpha(3), beta(3), gamma(1), delta(1), epsilon(1). CF(0) has three main subunits: a, b and c.

The protein localises to the cell membrane. Its function is as follows. Produces ATP from ADP in the presence of a proton gradient across the membrane. The polypeptide is ATP synthase epsilon chain (Thermobifida fusca (strain YX)).